The sequence spans 163 residues: uncharacterized protein (163 aa).

The protein belongs to the IMPDH/GMPR family.

This is an uncharacterized protein from Haemophilus influenzae (strain ATCC 51907 / DSM 11121 / KW20 / Rd).